The primary structure comprises 157 residues: Protein FAM219A (157 aa).

An N-acetylmethionine modification is found at methionine 1. The disordered stretch occupies residues 1–103; that stretch reads MMEEIDRFQD…SRYSSSGYSS (103 aa). A compositionally biased stretch (basic and acidic residues) spans 17-33; the sequence is SDRDCDAREEKQRELAR. The span at 38–52 shows a compositional bias: polar residues; that stretch reads KNGSMGSPVNQQPKK. Residues serine 44 and serine 74 each carry the phosphoserine modification. Threonine 85 bears the Phosphothreonine mark. Phosphoserine is present on residues serine 87 and serine 94. The span at 94 to 103 shows a compositional bias: low complexity; it reads SRYSSSGYSS.

This sequence belongs to the FAM219 family.

The protein is Protein FAM219A (Fam219a) of Mus musculus (Mouse).